The chain runs to 325 residues: Protein VP6-B (325 aa).

Disordered regions lie at residues 23–123 (INLI…TIGA) and 176–229 (VAEQ…EEQA). Composition is skewed to basic and acidic residues over residues 32–52 (ESGKEDKAEPKEESKAEESKD) and 61–79 (SQKKEGSKEAKDADVDRRI). Positions 106 to 123 (KVGGGGGNADAGVGTIGA) are enriched in gly residues. Basic and acidic residues-rich tracts occupy residues 176-201 (VAEQTERLRDLRRKEKSGAHAKAAER) and 210-226 (PHGDVQKEGTEEEKTSE).

It belongs to the orbivirus VP6 family.

It localises to the virion. Surrounds and interacts with the genomic dsRNA. Possesses ss- and dsRNA-binding capacity. Its hydrophilic nature and capability to bind ss- and dsRNA suggest that it interacts with BTV genomic RNA. The protein is Protein VP6-B (Segment-9) of Bluetongue virus 10 (isolate USA) (BTV 10).